A 159-amino-acid polypeptide reads, in one-letter code: MSVKGQFNMRNAAADTFAMVIFSFITGMMIEVFVSGMTFEQSLASRTLSIPVNIAIAWPYGVFRDYLLRTGHRLSPSSWMKGLSDMVAYVLFQSPVYACILLAVGAGTDQIITAVTSNAFVSGALGIVYGQFLDACRRMFKVPGYCRELSHPEPQHQEM.

4 consecutive transmembrane segments (helical) span residues 17-37 (FAMVIFSFITGMMIEVFVSGM), 48-68 (LSIPVNIAIAWPYGVFRDYLL), 86-106 (MVAYVLFQSPVYACILLAVGA), and 110-130 (QIITAVTSNAFVSGALGIVYG).

This sequence belongs to the AlaE exporter family.

The protein localises to the cell inner membrane. Functionally, exports L-alanine. The protein is L-alanine exporter AlaE of Photobacterium profundum (strain SS9).